Consider the following 334-residue polypeptide: MNGRVQPRLMLGFLLILLVILALGSANMGALSLSFRTLWNTSTNDAMWHIWLNIRLPRVLLAVVVGCALAVSGTIMQGLFRNPLADPGLLGISSGAALCVGLIIVMPFSLPPLLALYSHMVGAFIGSLAISTIIFTLSRWGHGNLARLLLAGIAINALCGAAVGVLTYISDDQQLRQFSLWSMGSLGQAQWSTLLVASSLILPTCILGLLQARQLNLLQLGDEEAHYLGVNVRQAKLRLLLLSAILIGAAVAVSGVIGFIGLVVPHLIRMRIGADHRWLLPGAALGGACLLLTADTLARTLVAPAEMPVGLLTSLLGGPYFLWLILRQREQRSG.

The next 9 helical transmembrane spans lie at Leu-9 to Gly-29, Leu-60 to Phe-80, Ala-96 to Leu-116, Tyr-117 to Leu-137, Leu-149 to Ile-169, Trp-191 to Gln-211, Ala-244 to Val-264, Trp-278 to Ala-298, and Glu-306 to Leu-326.

This sequence belongs to the binding-protein-dependent transport system permease family. FecCD subfamily.

The protein localises to the cell inner membrane. Its function is as follows. Part of the binding-protein-dependent transport system for hemin; probably responsible for the translocation of the substrate across the membrane. In Yersinia pestis, this protein is Hemin transport system permease protein HmuU (hmuU).